Consider the following 92-residue polypeptide: RNA-binding protein Hfq (92 aa).

Residues 9 to 68 (DPFLNALRRERVPVSVYLVNGIKLQGTIESFDQFVVLLRNTVSQMVYKHAISTVVPARNV) form the Sm domain. The interval 73-92 (GGGYVQSNEGNQAEDDDVEQ) is disordered.

Belongs to the Hfq family. Homohexamer.

RNA chaperone that binds small regulatory RNA (sRNAs) and mRNAs to facilitate mRNA translational regulation in response to envelope stress, environmental stress and changes in metabolite concentrations. Also binds with high specificity to tRNAs. The polypeptide is RNA-binding protein Hfq (Xanthomonas axonopodis pv. citri (strain 306)).